The following is a 304-amino-acid chain: Mycothiol acetyltransferase (304 aa).

2 consecutive N-acetyltransferase domains span residues 16–155 and 164–304; these read AHVE…RTGL and VALS…YRRA. Glu46 provides a ligand contact to 1D-myo-inositol 2-(L-cysteinylamino)-2-deoxy-alpha-D-glucopyranoside. Residue 87 to 89 coordinates acetyl-CoA; sequence LVV. 1D-myo-inositol 2-(L-cysteinylamino)-2-deoxy-alpha-D-glucopyranoside is bound by residues Glu190, Lys230, and Glu237. Acetyl-CoA contacts are provided by residues 241 to 243 and 248 to 254; these read LGV and AARGLGS. A 1D-myo-inositol 2-(L-cysteinylamino)-2-deoxy-alpha-D-glucopyranoside-binding site is contributed by Tyr275.

Belongs to the acetyltransferase family. MshD subfamily. Monomer.

It carries out the reaction 1D-myo-inositol 2-(L-cysteinylamino)-2-deoxy-alpha-D-glucopyranoside + acetyl-CoA = mycothiol + CoA + H(+). Catalyzes the transfer of acetyl from acetyl-CoA to desacetylmycothiol (Cys-GlcN-Ins) to form mycothiol. This is Mycothiol acetyltransferase from Clavibacter sepedonicus (Clavibacter michiganensis subsp. sepedonicus).